The primary structure comprises 390 residues: Digeranylgeranylglycerophospholipid reductase (390 aa).

FAD-binding residues include Ala-18, Glu-37, Cys-48, Ala-49, Ala-51, Arg-98, Val-122, Asp-278, Gly-290, and Ile-291. An a 2,3-bis-O-(geranylgeranyl)-sn-glycerol 1-phospholipid-binding site is contributed by Val-368.

The protein belongs to the geranylgeranyl reductase family. DGGGPL reductase subfamily. Requires FAD as cofactor.

The catalysed reaction is a 2,3-bis-O-phytanyl-sn-glycerol 1-phospholipid + 8 A = a 2,3-bis-O-(geranylgeranyl)-sn-glycerol 1-phospholipid + 8 AH2. It catalyses the reaction 2,3-bis-O-(phytanyl)-sn-glycerol 1-phosphate + 8 A = 2,3-bis-O-(geranylgeranyl)-sn-glycerol 1-phosphate + 8 AH2. It carries out the reaction CDP-2,3-bis-O-(geranylgeranyl)-sn-glycerol + 8 AH2 = CDP-2,3-bis-O-(phytanyl)-sn-glycerol + 8 A. The enzyme catalyses archaetidylserine + 8 AH2 = 2,3-bis-O-phytanyl-sn-glycero-3-phospho-L-serine + 8 A. It functions in the pathway membrane lipid metabolism; glycerophospholipid metabolism. Its function is as follows. Is involved in the reduction of 2,3-digeranylgeranylglycerophospholipids (unsaturated archaeols) into 2,3-diphytanylglycerophospholipids (saturated archaeols) in the biosynthesis of archaeal membrane lipids. Catalyzes the formation of archaetidic acid (2,3-di-O-phytanyl-sn-glyceryl phosphate) from 2,3-di-O-geranylgeranylglyceryl phosphate (DGGGP) via the hydrogenation of each double bond of the isoprenoid chains. Is also probably able to reduce double bonds of geranyl groups in CDP-2,3-bis-O-(geranylgeranyl)-sn-glycerol and archaetidylserine, thus acting at various stages in the biosynthesis of archaeal membrane lipids. The sequence is that of Digeranylgeranylglycerophospholipid reductase from Methanococcus vannielii (strain ATCC 35089 / DSM 1224 / JCM 13029 / OCM 148 / SB).